Here is a 261-residue protein sequence, read N- to C-terminus: Probable enoyl-CoA hydratase EchA17 (261 aa).

The protein belongs to the enoyl-CoA hydratase/isomerase family.

The enzyme catalyses a (3S)-3-hydroxyacyl-CoA = a (2E)-enoyl-CoA + H2O. It carries out the reaction a 4-saturated-(3S)-3-hydroxyacyl-CoA = a (3E)-enoyl-CoA + H2O. Could possibly oxidize fatty acids using specific components. This chain is Probable enoyl-CoA hydratase EchA17 (echA17), found in Mycobacterium bovis (strain BCG / Pasteur 1173P2).